The sequence spans 834 residues: Serine-rich coiled-coil domain-containing protein 2 (834 aa).

The interval 169-212 (PKSQLNGFYGNRSAGSMQRPRANSCATRSSSGESLAQSPDSSKS) is disordered. The segment covering 192-212 (SCATRSSSGESLAQSPDSSKS) has biased composition (polar residues). Ser223 is modified (phosphoserine). Residues 426–443 (RTRITPEEMSLKEEKHEN) show a composition bias toward basic and acidic residues. 5 disordered regions span residues 426 to 454 (RTRITPEEMSLKEEKHENGPPQDMFDSPK), 477 to 509 (CTKHTSGNNLVSPDTDYRAGSSFELSPSDSSDG), 573 to 628 (NMNR…SPYR), 695 to 714 (LHDIQLSLPSSPEPEDGDKV), and 780 to 834 (APSF…RGPQ). Position 452 is a phosphoserine (Ser452). The span at 497–507 (SSFELSPSDSS) shows a compositional bias: low complexity. Composition is skewed to basic and acidic residues over residues 573–584 (NMNRFDRPDRNV) and 601–611 (GQEHYHLSHPD). The stretch at 712–749 (DKVYKNEDLLNEIKQLKDEIKKKDEKIQLLELQLATQH) forms a coiled coil. Polar residues-rich tracts occupy residues 781–790 (PSFSPWQGSF) and 804–816 (TSSTTAFQQPSQT).

It belongs to the CCSER family.

The protein resides in the cytoplasm. The protein localises to the cytoskeleton. Its function is as follows. Microtubule-binding protein which might play a role in microtubule bundling. The polypeptide is Serine-rich coiled-coil domain-containing protein 2 (CCSER2) (Homo sapiens (Human)).